Consider the following 498-residue polypeptide: Putative ABC transporter ATP-binding protein MM_2387 (498 aa).

ABC transporter domains are found at residues 2 to 242 and 258 to 490; these read IELR…TSKS and ISIK…VEEK. Residues 36–43 and 290–297 contribute to the ATP site; these read GHSAAGKT and GENGSGKT.

Belongs to the ABC transporter superfamily.

It localises to the cell membrane. Functionally, probably part of an ABC transporter complex. Responsible for energy coupling to the transport system. In Methanosarcina mazei (strain ATCC BAA-159 / DSM 3647 / Goe1 / Go1 / JCM 11833 / OCM 88) (Methanosarcina frisia), this protein is Putative ABC transporter ATP-binding protein MM_2387.